A 66-amino-acid polypeptide reads, in one-letter code: Large ribosomal subunit protein uL29 (66 aa).

The protein belongs to the universal ribosomal protein uL29 family.

The protein is Large ribosomal subunit protein uL29 of Roseiflexus castenholzii (strain DSM 13941 / HLO8).